A 344-amino-acid polypeptide reads, in one-letter code: MLDERLISSHLLDEDDNNENSIRPGRLSEYIGQEKVKENVEVFITAARERKESLDHVLLSGPPGLGKTTLASIIANEVGKPIRKTSGPAIERPGDLAAILTNLEPGEVLFIDEIHRLNRNVEEIMYPAMEDYVIDIIIGKGPAARTLRLDLPPFTLIGATTRPGLLSSPLRDRFGISCRLDFYTPLELSEIILRAARILEISLDKEGATEIAGRSRGTPRVANRLLRRVRDYALVKGNGNIDFSLAKWALEMLEIDECGLDVMDRMILEAIIGKFSGGPVGLDTLAASVSEESDTISDVYEPYLLKLGFIQKTPRGRMATEHAYRHLGYPLKGNLEGKGLFSDA.

The interval 1 to 183 (MLDERLISSH…FGISCRLDFY (183 aa)) is large ATPase domain (RuvB-L). Residues I22, R23, G64, K67, T68, T69, 130 to 132 (EDY), R173, Y183, and R220 each bind ATP. Residue T68 coordinates Mg(2+). The interval 184-254 (TPLELSEIIL…LAKWALEMLE (71 aa)) is small ATPAse domain (RuvB-S). The tract at residues 257-344 (ECGLDVMDRM…LEGKGLFSDA (88 aa)) is head domain (RuvB-H). Residues K312 and R317 each contribute to the DNA site.

Belongs to the RuvB family. As to quaternary structure, homohexamer. Forms an RuvA(8)-RuvB(12)-Holliday junction (HJ) complex. HJ DNA is sandwiched between 2 RuvA tetramers; dsDNA enters through RuvA and exits via RuvB. An RuvB hexamer assembles on each DNA strand where it exits the tetramer. Each RuvB hexamer is contacted by two RuvA subunits (via domain III) on 2 adjacent RuvB subunits; this complex drives branch migration. In the full resolvosome a probable DNA-RuvA(4)-RuvB(12)-RuvC(2) complex forms which resolves the HJ.

It is found in the cytoplasm. It catalyses the reaction ATP + H2O = ADP + phosphate + H(+). Functionally, the RuvA-RuvB-RuvC complex processes Holliday junction (HJ) DNA during genetic recombination and DNA repair, while the RuvA-RuvB complex plays an important role in the rescue of blocked DNA replication forks via replication fork reversal (RFR). RuvA specifically binds to HJ cruciform DNA, conferring on it an open structure. The RuvB hexamer acts as an ATP-dependent pump, pulling dsDNA into and through the RuvAB complex. RuvB forms 2 homohexamers on either side of HJ DNA bound by 1 or 2 RuvA tetramers; 4 subunits per hexamer contact DNA at a time. Coordinated motions by a converter formed by DNA-disengaged RuvB subunits stimulates ATP hydrolysis and nucleotide exchange. Immobilization of the converter enables RuvB to convert the ATP-contained energy into a lever motion, pulling 2 nucleotides of DNA out of the RuvA tetramer per ATP hydrolyzed, thus driving DNA branch migration. The RuvB motors rotate together with the DNA substrate, which together with the progressing nucleotide cycle form the mechanistic basis for DNA recombination by continuous HJ branch migration. Branch migration allows RuvC to scan DNA until it finds its consensus sequence, where it cleaves and resolves cruciform DNA. This is Holliday junction branch migration complex subunit RuvB from Syntrophomonas wolfei subsp. wolfei (strain DSM 2245B / Goettingen).